The following is a 356-amino-acid chain: Uroporphyrinogen decarboxylase (356 aa).

Coproporphyrinogen I contacts are provided by Arg33, Ala35, Arg37, Arg46, Asp82, Tyr159, Ser214, and His334. Coproporphyrinogen III is bound by residues Arg33, Ala35, and Arg37. 4 residues coordinate coproporphyrinogen III: Asp82, Tyr159, Ser214, and His334.

The protein belongs to the uroporphyrinogen decarboxylase family. Homodimer.

The protein localises to the cytoplasm. It is found in the cytosol. The catalysed reaction is uroporphyrinogen III + 4 H(+) = coproporphyrinogen III + 4 CO2. Its pathway is porphyrin-containing compound metabolism; protoporphyrin-IX biosynthesis; coproporphyrinogen-III from 5-aminolevulinate: step 4/4. Functionally, catalyzes the decarboxylation of four acetate groups of uroporphyrinogen-III to yield coproporphyrinogen-III. The chain is Uroporphyrinogen decarboxylase from Drosophila melanogaster (Fruit fly).